The chain runs to 59 residues: MRCLPVFVILLLLIASAPSVDAQLKTKDDVPLASFHDNAKGTQHKRIINWCCLVFYQCC.

A signal peptide spans 1–22 (MRCLPVFVILLLLIASAPSVDA). A propeptide spanning residues 23–44 (QLKTKDDVPLASFHDNAKGTQH) is cleaved from the precursor.

It belongs to the conotoxin T superfamily. Post-translationally, contains 2 disulfide bonds that can be either 'C1-C3, C2-C4' or 'C1-C4, C2-C3', since these disulfide connectivities have been observed for conotoxins with cysteine framework V (for examples, see AC P0DQQ7 and AC P81755). Expressed by the venom duct.

It is found in the secreted. The sequence is that of Conotoxin Sr5.4 from Conus spurius (Alphabet cone).